Reading from the N-terminus, the 254-residue chain is tRNA (guanine-N(1)-)-methyltransferase (254 aa).

Residues Gly112 and 131 to 136 (IGDFIL) contribute to the S-adenosyl-L-methionine site.

This sequence belongs to the RNA methyltransferase TrmD family. Homodimer.

It localises to the cytoplasm. The catalysed reaction is guanosine(37) in tRNA + S-adenosyl-L-methionine = N(1)-methylguanosine(37) in tRNA + S-adenosyl-L-homocysteine + H(+). Functionally, specifically methylates guanosine-37 in various tRNAs. This Persephonella marina (strain DSM 14350 / EX-H1) protein is tRNA (guanine-N(1)-)-methyltransferase.